Consider the following 113-residue polypeptide: uncharacterized protein (113 aa).

The protein to M.jannaschii MJ0886 C-terminal region.

This is an uncharacterized protein from Clostridium pasteurianum.